Consider the following 507-residue polypeptide: Maturase K (507 aa).

The protein belongs to the intron maturase 2 family. MatK subfamily.

The protein resides in the plastid. The protein localises to the chloroplast. Its function is as follows. Usually encoded in the trnK tRNA gene intron. Probably assists in splicing its own and other chloroplast group II introns. This is Maturase K from Fagopyrum tataricum (Tartarian buckwheat).